Consider the following 80-residue polypeptide: Large ribosomal subunit protein bL31B (80 aa).

The protein belongs to the bacterial ribosomal protein bL31 family. Type B subfamily. As to quaternary structure, part of the 50S ribosomal subunit.

The sequence is that of Large ribosomal subunit protein bL31B from Exiguobacterium sp. (strain ATCC BAA-1283 / AT1b).